The chain runs to 798 residues: Sodium/hydrogen exchanger 4 (798 aa).

Residues 1–13 (MALQMFVTYSPWN) lie on the Cytoplasmic side of the membrane. The segment at residues 14–28 (CLLLLVALECSEASS) is an intramembrane region (name=A/M1). At 29 to 69 (DLNESANSTAQYASNAWFAAASSEPEEGISVFELDYDYVQI) the chain is on the cytoplasmic side. An intramembrane region (name=B/M2) is located at residues 70 to 90 (PYEVTLWILLASLAKIGFHLY). Residues 91–94 (HRLP) lie on the Cytoplasmic side of the membrane. Residues 95–115 (GLMPESCLLILVGALVGGIIF) traverse the membrane as a helical segment. Residues 116-127 (GTDHKSPPVMDS) are Extracellular-facing. A helical transmembrane segment spans residues 128-148 (SIYFLYLLPPIVLEGGYFMPT). Residues 149 to 154 (RPFFEN) are Cytoplasmic-facing. The helical transmembrane segment at 155–175 (IGSILWWAVLGALINALGIGL) threads the bilayer. Topologically, residues 176–196 (SLYLICQVKAFGLGDVNLLQN) are extracellular. Residues 197-217 (LLFGSLISAVDPVAVLAVFEE) traverse the membrane as a helical segment. Topologically, residues 218-226 (ARVNEQLYM) are cytoplasmic. Residues 227–247 (MIFGEALLNDGITVVLYNMLI) traverse the membrane as a helical segment. Topologically, residues 248-270 (AFTKMHKFEDIETVDILAGCARF) are extracellular. The helical transmembrane segment at 271 to 291 (IVVGLGGVLFGIVFGFISAFI) threads the bilayer. Residues 292–304 (TRFTQNISAIEPL) lie on the Cytoplasmic side of the membrane. Residues 305–325 (IVFMFSYLSYLAAETLYLSGI) form a helical membrane-spanning segment. At 326-356 (LAITACAVTMKKYVEENVSQTSYTTIKYFMK) the chain is on the extracellular side. An N-linked (GlcNAc...) asparagine glycan is attached at asparagine 342. Residues 357 to 373 (MLSSVSETLIFIFMGVS) traverse the membrane as a helical segment. Residues 374 to 384 (TVGKNHEWNWA) are Cytoplasmic-facing. A helical transmembrane segment spans residues 385-405 (FICFTLAFCQIWRAISVFALF). Residues 406–420 (YISNQFRTFPFSIKD) are Extracellular-facing. Positions 421 to 441 (QCIIFYSGVRGAGSFSLAFLL) form an intramembrane region, name=L. Over 442–450 (PLSLFPRKK) the chain is Extracellular. Residues 451 to 471 (MFVTATLVVIYFTVFIQGITV) traverse the membrane as a helical segment. Residues 472 to 798 (GPLVRYLDVK…RSHSPLLQKK (327 aa)) lie on the Cytoplasmic side of the membrane. Disordered regions lie at residues 662-690 (PYGN…GSPS) and 776-798 (RWTA…LQKK). Residues 784 to 798 (GRDHHRSHSPLLQKK) show a composition bias toward basic residues.

It belongs to the monovalent cation:proton antiporter 1 (CPA1) transporter (TC 2.A.36) family. As to quaternary structure, homodimer; each protomer has one site for sodium and one site for proton binding. Interacts with CHP1 and CHP2. In terms of processing, may be phosphorylated.

The protein resides in the basolateral cell membrane. It is found in the apical cell membrane. It localises to the zymogen granule membrane. The catalysed reaction is Na(+)(in) + H(+)(out) = Na(+)(out) + H(+)(in). It catalyses the reaction Na(+)(out) + NH4(+)(in) = Na(+)(in) + NH4(+)(out). Functionally, electroneutral antiporter that exchanges sodium for protons or ammonium ions at the basolateral membrane of epithelia to regulate cell volume and intracellular pH upon hypertonic conditions. As part of transcellular ammonia transport in renal tubules, mediates basolateral ammonium extrusion in the medullary thick ascending limb, regulating the corticopapillary ammonium gradient and overall renal acid excretion. Mediates sodium:proton exchange in gastric parietal cells secondary to cAMP-dependent acid secretion and hyperosmolarity. Possibly coupled to chloride:bicarbonate antiporter, enables loading of parietal cells with sodium and chloride ions to maintain cell volume and normal gastric acid secretion. Functions as a sodium sensor in neurons of organum vasculosum of the lamina terminalis where it regulates water intake in response to increased sodium concentration in body fluids. The protein is Sodium/hydrogen exchanger 4 (SLC9A4) of Homo sapiens (Human).